The sequence spans 149 residues: NPC intracellular cholesterol transporter 2 (149 aa).

The first 19 residues, 1–19 (MRFLTVAFLFLALSASALA), serve as a signal peptide directing secretion. Intrachain disulfides connect C27–C140, C42–C47, and C93–C99. A glycan (N-linked (GlcNAc...) asparagine) is linked at N58. K116 is modified (N6-acetyllysine).

Belongs to the NPC2 family. In terms of assembly, interacts with NPC1 (via the second lumenal domain) in a cholestrol-dependent manner. Interacts with NUS1/NgBR, the interaction stabilizes NCP2 and regulates cholesterol trafficking. Interacts with DHDDS. Interacts with NEDD4L (via C2 domain). Interacts with NPC1L1. As to expression, expressed in kidney, spleen, liver and mammary gland, but not in testis.

Its subcellular location is the secreted. It is found in the endoplasmic reticulum. It localises to the lysosome. It catalyses the reaction cholesterol(in) = cholesterol(out). Functionally, intracellular cholesterol transporter which acts in concert with NPC1 and plays an important role in the egress of cholesterol from the lysosomal compartment. Unesterified cholesterol that has been released from LDLs in the lumen of the late endosomes/lysosomes is transferred by NPC2 to the cholesterol-binding pocket in the N-terminal domain of NPC1. May bind and mobilize cholesterol that is associated with membranes. NPC2 binds cholesterol with a 1:1 stoichiometry. Can bind a variety of sterols, including lathosterol, desmosterol and the plant sterols stigmasterol and beta-sitosterol. The secreted form of NCP2 regulates biliary cholesterol secretion via stimulation of ABCG5/ABCG8-mediated cholesterol transport. The chain is NPC intracellular cholesterol transporter 2 from Bos taurus (Bovine).